The chain runs to 148 residues: Small ribosomal subunit protein eS19 (148 aa).

Belongs to the eukaryotic ribosomal protein eS19 family.

This Dictyostelium discoideum (Social amoeba) protein is Small ribosomal subunit protein eS19 (rps19).